The chain runs to 400 residues: WW domain-containing transcription regulator protein 1 (400 aa).

K46 is covalently cross-linked (Glycyl lysine isopeptide (Lys-Gly) (interchain with G-Cter in ubiquitin)). Positions 52 to 117 (FFKEPDSGSH…QQHAHLRQQS (66 aa)) are disordered. The segment covering 61-70 (HSRQSSTDSS) has biased composition (polar residues). The residue at position 62 (S62) is a Phosphoserine. Residue S89 is modified to Phosphoserine; by LATS2. A Phosphoserine modification is found at S105. Residues 124–157 (LPLPPGWEMTFTATGQRYFLNHIEKITTWQDPRK) form the WW domain. The interval 222-400 (PNALTTQQQQ…NKSEPFLTWL (179 aa)) is required for interaction with PALS1. The stretch at 225 to 259 (LTTQQQQQQKLRLQRIQMERERIRMRQEELMRQEA) forms a coiled coil. At S295 the chain carries Phosphoserine. The residue at position 311 (S311) is a Phosphoserine; by LATS2. A PDZ-binding motif is present at residues 394–400 (EPFLTWL).

Binds to SLC9A3R2 via the PDZ motif at the plasma membrane. Binds to YWHAZ in vivo and in vitro through the phosphoserine-binding motif RSHSSP. Interacts (via coiled-coil domain) with SMAD2 (via MH1 domain), SMAD3 and SMAD4. Interacts with MED15. Interacts with PAX8 and NKX2-1. Interacts with TEAD1, TEAD2, TEAD3 and TEAD4. Interacts (via WW domain) with PALS1. Interacts with LATS1. Interacts with YAP1 (when phosphorylated at 'Ser-127'). Interacts (via WW domain) with PRRG4 (via cytoplasmic domain). Interacts (via WW domain) with AMOTL2 (via PPXY motif); the interaction promotes WWTR1/TAZ localization to the cytoplasm and tight junctions, thereby inhibiting its transcriptional coactivator properties. Interacts (via WW domain) with AMOT isoform 1; the interaction facilitates translocation of WWTR1/TAZ to the cytoplasm. In terms of processing, phosphorylated by LATS2 and STK3/MST2. Phosphorylation by LATS2 results in creation of 14-3-3 binding sites, retention in the cytoplasm, and functional inactivation. Phosphorylation results in the inhibition of transcriptional coactivation through YWHAZ-mediated nuclear export. Phosphorylated in the nucleus by PRP4K; phosphorylation leads to nuclear exclusion. Ubiquitinated at Lys-46; leading to proteasomal degradation. Deubiquitinated and stabilized by UCHL1 at Lys-46; leading to inhibition of osteoclastogenesis. In terms of tissue distribution, highly expressed in kidney, heart, placenta and lung. Expressed in the thyroid tissue.

Its subcellular location is the nucleus. The protein resides in the cytoplasm. The protein localises to the cell membrane. It localises to the cell junction. It is found in the tight junction. In terms of biological role, transcriptional coactivator which acts as a downstream regulatory target in the Hippo signaling pathway that plays a pivotal role in organ size control and tumor suppression by restricting proliferation and promoting apoptosis. The core of this pathway is composed of a kinase cascade wherein STK3/MST2 and STK4/MST1, in complex with its regulatory protein SAV1, phosphorylates and activates LATS1/2 in complex with its regulatory protein MOB1, which in turn phosphorylates and inactivates YAP1 oncoprotein and WWTR1/TAZ. WWTR1 enhances PAX8 and NKX2-1/TTF1-dependent gene activation. In conjunction with YAP1, involved in the regulation of TGFB1-dependent SMAD2 and SMAD3 nuclear accumulation. Plays a key role in coupling SMADs to the transcriptional machinery such as the mediator complex. Regulates embryonic stem-cell self-renewal, promotes cell proliferation and epithelial-mesenchymal transition. This is WW domain-containing transcription regulator protein 1 from Homo sapiens (Human).